Consider the following 103-residue polypeptide: Cell division topological specificity factor (103 aa).

Belongs to the MinE family.

Its function is as follows. Prevents the cell division inhibition by proteins MinC and MinD at internal division sites while permitting inhibition at polar sites. This ensures cell division at the proper site by restricting the formation of a division septum at the midpoint of the long axis of the cell. This is Cell division topological specificity factor from Prochlorococcus marinus (strain MIT 9211).